A 168-amino-acid polypeptide reads, in one-letter code: Zinc finger A20 and AN1 domain-containing stress-associated protein 1 (168 aa).

The A20-type zinc finger occupies 13-47; that stretch reads PSEPKLCVKGCGFFGSPSNMNLCSKCYRDIRATEE. Positions 19, 23, 35, and 38 each coordinate Zn(2+). The disordered stretch occupies residues 49 to 105; sequence TASAKAAVEKSLNPNKPKTQPQQSQEITQGVLGSGSSSSSTRGGDSAAAPLDPPKST. A compositionally biased stretch (polar residues) spans 60–76; that stretch reads LNPNKPKTQPQQSQEIT. Over residues 82–94 the composition is skewed to low complexity; that stretch reads SGSSSSSTRGGDS. The segment at 103–149 adopts an AN1-type zinc-finger fold; sequence KSTATRCLSCNKKVGVTGFKCRCGSTFCGTHRYPESHECQFDFKGVA. Residues Cys109, Cys112, Cys123, Cys125, Cys130, His133, His139, and Cys141 each contribute to the Zn(2+) site.

Functionally, may be involved in environmental stress response. This chain is Zinc finger A20 and AN1 domain-containing stress-associated protein 1 (SAP1), found in Arabidopsis thaliana (Mouse-ear cress).